The sequence spans 122 residues: Large ribosomal subunit protein uL14 (122 aa).

The protein belongs to the universal ribosomal protein uL14 family. Part of the 50S ribosomal subunit. Forms a cluster with proteins L3 and L19. In the 70S ribosome, L14 and L19 interact and together make contacts with the 16S rRNA in bridges B5 and B8.

Its function is as follows. Binds to 23S rRNA. Forms part of two intersubunit bridges in the 70S ribosome. The chain is Large ribosomal subunit protein uL14 from Thermosipho africanus (strain TCF52B).